A 267-amino-acid chain; its full sequence is L-erythrulose-1-phosphate isomerase (267 aa).

H95 (electrophile) is an active-site residue. E168 serves as the catalytic Proton acceptor. G174 and S211 together coordinate substrate.

The protein belongs to the triosephosphate isomerase family. As to quaternary structure, homodimer.

It is found in the cytoplasm. It catalyses the reaction L-erythrulose 1-phosphate = D-erythrulose 4-phosphate. It functions in the pathway carbohydrate metabolism; erythritol degradation. Its function is as follows. Catalyzes the isomerization of D-erythrulose-4P to L-erythrulose-1P. This chain is L-erythrulose-1-phosphate isomerase, found in Rhizobium etli (strain ATCC 51251 / DSM 11541 / JCM 21823 / NBRC 15573 / CFN 42).